A 93-amino-acid polypeptide reads, in one-letter code: Large ribosomal subunit protein uL23cz/uL23cy (93 aa).

This sequence belongs to the universal ribosomal protein uL23 family. In terms of assembly, part of the 50S ribosomal subunit.

It localises to the plastid. The protein localises to the chloroplast. Its function is as follows. Binds to 23S rRNA. This is Large ribosomal subunit protein uL23cz/uL23cy (rpl23-A) from Nandina domestica (Heavenly bamboo).